We begin with the raw amino-acid sequence, 275 residues long: Large ribosomal subunit protein uL2c (275 aa).

The tract at residues 225–252 (MNPCDHPHGGGEGRSPIGRAKPVTPWGK) is disordered.

The protein belongs to the universal ribosomal protein uL2 family. As to quaternary structure, part of the 50S ribosomal subunit.

The protein resides in the plastid. It localises to the chloroplast. This chain is Large ribosomal subunit protein uL2c (rpl2), found in Guillardia theta (Cryptophyte).